Reading from the N-terminus, the 227-residue chain is Endo-1,4-beta-xylanase 2 (227 aa).

The first 36 residues, 1–36 (MVSIKSVLAAATAVSSALAAPFDFVPRDNSTALQAR), serve as a signal peptide directing secretion. An N-linked (GlcNAc...) asparagine glycan is attached at Asn-29. Residues 37-225 (QVTPNAEGWH…SSGESDIYVQ (189 aa)) enclose the GH11 domain. Catalysis depends on Glu-121, which acts as the Nucleophile. Glu-212 acts as the Proton donor in catalysis.

It belongs to the glycosyl hydrolase 11 (cellulase G) family.

Its subcellular location is the secreted. The catalysed reaction is Endohydrolysis of (1-&gt;4)-beta-D-xylosidic linkages in xylans.. The protein operates within glycan degradation; xylan degradation. In terms of biological role, endo-1,4-beta-xylanase involved in the hydrolysis of xylan, a major structural heterogeneous polysaccharide found in plant biomass representing the second most abundant polysaccharide in the biosphere, after cellulose. In Humicola insolens (Soft-rot fungus), this protein is Endo-1,4-beta-xylanase 2 (xyn2).